Here is a 755-residue protein sequence, read N- to C-terminus: 1,4-alpha-glucan branching enzyme GlgB (755 aa).

The Nucleophile role is filled by D431. E484 (proton donor) is an active-site residue.

It belongs to the glycosyl hydrolase 13 family. GlgB subfamily. Monomer.

It catalyses the reaction Transfers a segment of a (1-&gt;4)-alpha-D-glucan chain to a primary hydroxy group in a similar glucan chain.. It functions in the pathway glycan biosynthesis; glycogen biosynthesis. Catalyzes the formation of the alpha-1,6-glucosidic linkages in glycogen by scission of a 1,4-alpha-linked oligosaccharide from growing alpha-1,4-glucan chains and the subsequent attachment of the oligosaccharide to the alpha-1,6 position. The chain is 1,4-alpha-glucan branching enzyme GlgB from Prochlorococcus marinus (strain NATL2A).